Consider the following 76-residue polypeptide: Defensin-like protein 71 (76 aa).

The signal sequence occupies residues methionine 1–alanine 22. Cystine bridges form between cysteine 36–cysteine 74, cysteine 40–cysteine 63, cysteine 49–cysteine 72, and cysteine 53–cysteine 73.

This sequence belongs to the DEFL family.

Its subcellular location is the secreted. The sequence is that of Defensin-like protein 71 (LCR84) from Arabidopsis thaliana (Mouse-ear cress).